The following is a 218-amino-acid chain: Mitochondrial fission factor (218 aa).

Residues 1 to 198 (MAEISRIQYE…ENKERAKREM (198 aa)) are Cytoplasmic-facing. The residue at position 89 (Thr89) is a Phosphothreonine. Ser129, Ser131, Ser146, and Ser171 each carry phosphoserine. Residues 167 to 198 (VDAASLRRQIIKLNRRLQLLEEENKERAKREM) adopt a coiled-coil conformation. A helical; Anchor for type IV membrane protein membrane pass occupies residues 199–216 (VMYSITVAFWLLNSWLWF). The Mitochondrial intermembrane segment spans residues 217-218 (RR).

It belongs to the Tango11 family. In terms of assembly, homodimer. Interacts with DNM1L. Interacts with C11orf65/MFI; the interaction inhibits MFF interaction with DNM1L.

It localises to the mitochondrion outer membrane. The protein resides in the peroxisome. Its subcellular location is the cytoplasmic vesicle. It is found in the secretory vesicle. The protein localises to the synaptic vesicle. Plays a role in mitochondrial and peroxisomal fission. Promotes the recruitment and association of the fission mediator dynamin-related protein 1 (DNM1L) to the mitochondrial surface. May be involved in regulation of synaptic vesicle membrane dynamics by recruitment of DNM1L to clathrin-containing vesicles. This Rattus norvegicus (Rat) protein is Mitochondrial fission factor (Mff).